Here is a 173-residue protein sequence, read N- to C-terminus: Peptidyl-prolyl cis-trans isomerase 3 (173 aa).

Residues 7–170 (FFDITIGGKA…KDCMIADCGQ (164 aa)) form the PPIase cyclophilin-type domain.

It belongs to the cyclophilin-type PPIase family. Exclusively expressed in the single anterior excretory cell.

It catalyses the reaction [protein]-peptidylproline (omega=180) = [protein]-peptidylproline (omega=0). In terms of biological role, catalyzes the cis-trans isomerization of proline imidic peptide bonds in oligopeptides. Plays a role in protein folding, transport and assembly. The protein is Peptidyl-prolyl cis-trans isomerase 3 (cyn-3) of Caenorhabditis elegans.